Here is a 283-residue protein sequence, read N- to C-terminus: Shikimate dehydrogenase (NADP(+)) (283 aa).

Shikimate-binding positions include 16–18 (SLS) and T63. K67 (proton acceptor) is an active-site residue. D79 is an NADP(+) binding site. 2 residues coordinate shikimate: N88 and D103. NADP(+)-binding positions include 128–132 (GAGGA) and G243.

This sequence belongs to the shikimate dehydrogenase family. Homodimer.

It catalyses the reaction shikimate + NADP(+) = 3-dehydroshikimate + NADPH + H(+). It functions in the pathway metabolic intermediate biosynthesis; chorismate biosynthesis; chorismate from D-erythrose 4-phosphate and phosphoenolpyruvate: step 4/7. Involved in the biosynthesis of the chorismate, which leads to the biosynthesis of aromatic amino acids. Catalyzes the reversible NADPH linked reduction of 3-dehydroshikimate (DHSA) to yield shikimate (SA). In Xanthomonas euvesicatoria pv. vesicatoria (strain 85-10) (Xanthomonas campestris pv. vesicatoria), this protein is Shikimate dehydrogenase (NADP(+)).